The following is a 420-amino-acid chain: Glycogen synthase kinase-3 beta (420 aa).

Residues 1 to 22 (MSGRPRTTSFAESCKPVQQPSA) are compositionally biased toward polar residues. The interval 1-35 (MSGRPRTTSFAESCKPVQQPSAFGSMKVSRDKDGS) is disordered. Residue S9 is modified to Phosphoserine; by PKB/AKT1, RPS6KA3 and SGK3. C14 is lipidated: S-palmitoyl cysteine. The Protein kinase domain occupies 56-340 (YTDTKVIGNG…PLEACAHSFF (285 aa)). ATP-binding positions include 62 to 70 (IGNGSFGVV) and K85. Residue D181 is the Proton acceptor of the active site. Y216 carries the post-translational modification Phosphotyrosine. Low complexity-rich tracts occupy residues 387–401 (AAST…SDAN) and 409–420 (NNAAFASASNST). A disordered region spans residues 387–420 (AASTPTNATAASDANAGDRGQTNNAAFASASNST). S389 is subject to Phosphoserine. T390 is modified (phosphothreonine).

The protein belongs to the protein kinase superfamily. CMGC Ser/Thr protein kinase family. GSK-3 subfamily. In terms of assembly, monomer. Interacts with DAB2IP (via C2 domain); the interaction stimulates GSK3B kinase activation. Interacts (via C2 domain) with PPP2CA. Interacts with ARRB2, AXIN1, CABYR, DISC1, MMP2, MUC1, NIN, PRUNE1 and ZBED3. Interacts with AXIN1; the interaction mediates hyperphosphorylation of CTNNB1 leading to its ubiquitination and destruction. Interacts with and phosphorylates SNAI1. Interacts with DNM1L (via a C-terminal domain). Found in a complex composed of MACF1, APC, AXIN1, CTNNB1 and GSK3B. Interacts with SGK3. Interacts with the CLOCK-BMAL1 heterodimer. Interacts with the BMAL1. Interacts with CTNND2. The complex composed, at least, of APC, CTNNB1 and GSK3B interacts with JPT1; the interaction requires the inactive form of GSK3B (phosphorylated at 'Ser-9'). Forms a complex composed of PRKAR2A or PRKAR2B, GSK3B and GSKIP through GSKIP interaction; facilitates PKA-induced phosphorylation and regulates GSK3B activity. Interacts with GSKIP. Interacts with GID8. Interacts with PIWIL2. Interacts with LMBR1L. Interacts with DDX3X. Interacts with BIRC2. Interacts with TNFRSF10B; TNFRSF10B stimulation inhibits GSK3B kinase activity. Found in a complex with SLC39A6, SLC39A10 and with GSK3B that controls NCAM1 phosphorylation. Interacts with PKP3 (via ARM repeats); the interaction may be involved in PKP3 protein degradation. Phosphorylated by AKT1 and ILK1. Upon insulin-mediated signaling, the activated PKB/AKT1 and RPS6KA3 protein kinases phosphorylate and deactivate GSK3B, resulting in the dephosphorylation and activation of GYS1. Activated by phosphorylation at Tyr-216. Inactivated by phosphorylation at Ser-9. In terms of processing, mono-ADP-ribosylation by PARP10 negatively regulates kinase activity. Post-translationally, palmitoylated. Palmitoylation by ZDHHC4 prevents AKT1-mediated phosphorylation.

Its subcellular location is the cytoplasm. The protein resides in the nucleus. It is found in the cell membrane. The catalysed reaction is L-seryl-[tau protein] + ATP = O-phospho-L-seryl-[tau protein] + ADP + H(+). It catalyses the reaction L-threonyl-[tau protein] + ATP = O-phospho-L-threonyl-[tau protein] + ADP + H(+). The enzyme catalyses L-seryl-[protein] + ATP = O-phospho-L-seryl-[protein] + ADP + H(+). It carries out the reaction L-threonyl-[protein] + ATP = O-phospho-L-threonyl-[protein] + ADP + H(+). Its activity is regulated as follows. Activated by phosphorylation at Tyr-216. In response to insulin, inhibited by phosphorylation at Ser-9 by PKB/AKT1; phosphorylation at this site causes a conformational change, preventing access of substrates to the active site. Inhibited by IL22 treatment which also triggers phosphorylation at Ser-9, promoting inactivation. Inhibited by lithium. In terms of biological role, constitutively active protein kinase that acts as a negative regulator in the hormonal control of glucose homeostasis, Wnt signaling and regulation of transcription factors and microtubules, by phosphorylating and inactivating glycogen synthase (GYS1 or GYS2), EIF2B, CTNNB1/beta-catenin, APC, AXIN1, DPYSL2/CRMP2, JUN, NFATC1/NFATC, MAPT/TAU and MACF1. Requires primed phosphorylation of the majority of its substrates. In skeletal muscle, contributes to insulin regulation of glycogen synthesis by phosphorylating and inhibiting GYS1 activity and hence glycogen synthesis. May also mediate the development of insulin resistance by regulating activation of transcription factors. Regulates protein synthesis by controlling the activity of initiation factor 2B (EIF2BE/EIF2B5) in the same manner as glycogen synthase. In Wnt signaling, GSK3B forms a multimeric complex with APC, AXIN1 and CTNNB1/beta-catenin and phosphorylates the N-terminus of CTNNB1 leading to its degradation mediated by ubiquitin/proteasomes. Phosphorylates JUN at sites proximal to its DNA-binding domain, thereby reducing its affinity for DNA. Phosphorylates NFATC1/NFATC on conserved serine residues promoting NFATC1/NFATC nuclear export, shutting off NFATC1/NFATC gene regulation, and thereby opposing the action of calcineurin. Phosphorylates MAPT/TAU on 'Thr-548', decreasing significantly MAPT/TAU ability to bind and stabilize microtubules. MAPT/TAU is the principal component of neurofibrillary tangles in Alzheimer disease. Plays an important role in ERBB2-dependent stabilization of microtubules at the cell cortex. Phosphorylates MACF1, inhibiting its binding to microtubules which is critical for its role in bulge stem cell migration and skin wound repair. Probably regulates NF-kappa-B (NFKB1) at the transcriptional level and is required for the NF-kappa-B-mediated anti-apoptotic response to TNF-alpha (TNF/TNFA). Negatively regulates replication in pancreatic beta-cells, resulting in apoptosis, loss of beta-cells and diabetes. Through phosphorylation of the anti-apoptotic protein MCL1, may control cell apoptosis in response to growth factors deprivation. Phosphorylates MUC1 in breast cancer cells, decreasing the interaction of MUC1 with CTNNB1/beta-catenin. Is necessary for the establishment of neuronal polarity and axon outgrowth. Phosphorylates MARK2, leading to inhibition of its activity. Phosphorylates SIK1 at 'Thr-182', leading to sustainment of its activity. Phosphorylates ZC3HAV1 which enhances its antiviral activity. Phosphorylates SNAI1, leading to its ubiquitination and proteasomal degradation. Phosphorylates SFPQ at 'Thr-687' upon T-cell activation. Phosphorylates NR1D1 st 'Ser-55' and 'Ser-59' and stabilizes it by protecting it from proteasomal degradation. Regulates the circadian clock via phosphorylation of the major clock components including BMAL1, CLOCK and PER2. Phosphorylates CLOCK AT 'Ser-427' and targets it for proteasomal degradation. Phosphorylates BMAL1 at 'Ser-17' and 'Ser-21' and primes it for ubiquitination and proteasomal degradation. Phosphorylates FBXL2 at 'Thr-404' and primes it for ubiquitination by the SCF(FBXO3) complex and proteasomal degradation. Phosphorylates OGT at 'Ser-3' or 'Ser-4' which positively regulates its activity. Phosphorylates MYCN in neuroblastoma cells which may promote its degradation. Regulates the circadian rhythmicity of hippocampal long-term potentiation and BMAL1 and PER2 expression. Acts as a regulator of autophagy by mediating phosphorylation of KAT5/TIP60 under starvation conditions, activating KAT5/TIP60 acetyltransferase activity and promoting acetylation of key autophagy regulators, such as ULK1 and RUBCNL/Pacer. Negatively regulates extrinsic apoptotic signaling pathway via death domain receptors. Promotes the formation of an anti-apoptotic complex, made of DDX3X, BRIC2 and GSK3B, at death receptors, including TNFRSF10B. The anti-apoptotic function is most effective with weak apoptotic signals and can be overcome by stronger stimulation. Phosphorylates E2F1, promoting the interaction between E2F1 and USP11, stabilizing E2F1 and promoting its activity. Phosphorylates mTORC2 complex component RICTOR at 'Ser-1235' in response to endoplasmic stress, inhibiting mTORC2. Phosphorylates FXR1, promoting FXR1 ubiquitination by the SCF(FBXO4) complex and FXR1 degradation by the proteasome. Phosphorylates interleukin-22 receptor subunit IL22RA1, preventing its proteasomal degradation. The polypeptide is Glycogen synthase kinase-3 beta (Spermophilus citellus (European ground squirrel)).